Reading from the N-terminus, the 521-residue chain is Glucose-1-phosphate adenylyltransferase small subunit, chloroplastic (521 aa).

The tract at residues 1-24 (MAASIGALKSSPSSHNCINERRND) is disordered. A chloroplast-targeting transit peptide spans 1-72 (MAASIGALKS…RSPLIVSPKA (72 aa)).

This sequence belongs to the bacterial/plant glucose-1-phosphate adenylyltransferase family. Heterotetramer.

It is found in the plastid. It localises to the chloroplast. The enzyme catalyses alpha-D-glucose 1-phosphate + ATP + H(+) = ADP-alpha-D-glucose + diphosphate. The protein operates within glycan biosynthesis; starch biosynthesis. Activated by 3'phosphoglycerate, inhibited by orthophosphate. Allosteric regulation. This protein plays a role in synthesis of starch. It catalyzes the synthesis of the activated glycosyl donor, ADP-glucose from Glc-1-P and ATP. This chain is Glucose-1-phosphate adenylyltransferase small subunit, chloroplastic, found in Solanum lycopersicum (Tomato).